A 500-amino-acid chain; its full sequence is MIALFGEKLRFFDTTLRDGEQTPGVSLTPDQKCIIATALAAVGVDVIEAGSAAASPGDRAAIRQIANAGLGVEVCTFVRAMTGDIDAAVECGVDSVHLVVPVSDLHIQKKLRKDRATVAAMANKAVDYAKERGLIVELSGEDASRADQSFLAEVFASGVEHGADRLCFCDTVGLMTPERTALMIPPLAAIAPLSIHCHDDLGFGLATTIAALKAGASCAHVTVNGLGERAGNTPLEEVVMALERLYGYDTRIRTERLYPLSVLVSRLTGVPLPAQKPIVGELAFTHESGIHADGILKDPSTYEPLAPETVGRTRRIILGKHSGSASVEAALQESGYRPTPAQLQVIVARVKHLGDQGHRVTDGDLAAIAEAVLEVSTEPVLVLKQFTVVSGSGVLPTASVTLLVNGAEVTNAATGTGPVDAAIEALRRSVADVAAISLLEYHVDAITGGTDALVEVTATLSNGEMTRTSRGAETDIIAASVEAVVQGMNRLLRRRDEDRR.

Residues 9 to 258 (LRFFDTTLRD…DTRIRTERLY (250 aa)) enclose the Pyruvate carboxyltransferase domain.

The protein belongs to the alpha-IPM synthase/homocitrate synthase family. Homodimer.

The catalysed reaction is pyruvate + acetyl-CoA + H2O = (3R)-citramalate + CoA + H(+). The protein operates within amino-acid biosynthesis; L-isoleucine biosynthesis; 2-oxobutanoate from pyruvate: step 1/3. Its function is as follows. Catalyzes the condensation of pyruvate and acetyl-coenzyme A to form (R)-citramalate. This is Putative (R)-citramalate synthase CimA from Methanosphaerula palustris (strain ATCC BAA-1556 / DSM 19958 / E1-9c).